The chain runs to 532 residues: Protein DETOXIFICATION 51 (532 aa).

The next 12 helical transmembrane spans lie at 65–85 (FPIA…MFFL), 98–118 (LAIA…ALGM), 142–162 (VVFL…VGKI), 176–196 (AQTY…LHPI), 208–228 (PVTL…LFLV), 238–258 (VAVA…CYVW), 290–310 (VSVC…GLLV), 316–336 (VAAM…PSSL), 358–378 (LTAT…AAFA), 395–415 (ILQL…GNCP), 439–459 (AFYL…GIGF), and 461–481 (GLWV…MYVV).

It belongs to the multi antimicrobial extrusion (MATE) (TC 2.A.66.1) family. In terms of tissue distribution, expressed in the meristematic regions. Mainly detected in tissues where cells were actively dividing, such as leaf primordia and young leaves, the junction between lateral root and the primary root, root cap, hydathodes, the junction between secondary inflorescence and the main inflorescence, young stamen and young siliques. Highly expressed at the junction between the hypocotyl and the root, and at the marginal areas of cotyledons and true leaves, coinciding with the locations of the hydathode. Also highly expressed at the basal regions of the newly emerged lateral roots. In the floral organs, mostly expressed at the style of the pistil.

The protein resides in the endosome membrane. The protein localises to the late endosome membrane. Its function is as follows. Functions as a multidrug and toxin extrusion transporter that negatively regulates plant disease resistance. Plays an important role in maintaining normal plant architecture, possibly by regulating local auxin biosynthesis. May act as a negative regulator of hypocotyl cell elongation in the light. The protein is Protein DETOXIFICATION 51 of Arabidopsis thaliana (Mouse-ear cress).